Consider the following 537-residue polypeptide: 2-isopropylmalate synthase (537 aa).

The region spanning 8–273 (IIIFDTTLRD…FLGRPVDSME (266 aa)) is the Pyruvate carboxyltransferase domain. Mn(2+)-binding residues include aspartate 17, histidine 208, histidine 210, and asparagine 244. The interval 408–537 (RLELVQVSCG…PSEPVLTSKN (130 aa)) is regulatory domain.

This sequence belongs to the alpha-IPM synthase/homocitrate synthase family. LeuA type 1 subfamily. Homodimer. Mn(2+) is required as a cofactor.

Its subcellular location is the cytoplasm. The enzyme catalyses 3-methyl-2-oxobutanoate + acetyl-CoA + H2O = (2S)-2-isopropylmalate + CoA + H(+). Its pathway is amino-acid biosynthesis; L-leucine biosynthesis; L-leucine from 3-methyl-2-oxobutanoate: step 1/4. Functionally, catalyzes the condensation of the acetyl group of acetyl-CoA with 3-methyl-2-oxobutanoate (2-ketoisovalerate) to form 3-carboxy-3-hydroxy-4-methylpentanoate (2-isopropylmalate). The polypeptide is 2-isopropylmalate synthase (Crocosphaera subtropica (strain ATCC 51142 / BH68) (Cyanothece sp. (strain ATCC 51142))).